Reading from the N-terminus, the 298-residue chain is Tyrosine recombinase XerD (298 aa).

The Core-binding (CB) domain maps to Ala-3–Leu-88. One can recognise a Tyr recombinase domain in the interval Pro-109–Ala-292. Catalysis depends on residues Arg-149, Lys-173, His-244, Arg-247, and His-270. The active-site O-(3'-phospho-DNA)-tyrosine intermediate is the Tyr-279.

The protein belongs to the 'phage' integrase family. XerD subfamily. In terms of assembly, forms a cyclic heterotetrameric complex composed of two molecules of XerC and two molecules of XerD.

The protein localises to the cytoplasm. Functionally, site-specific tyrosine recombinase, which acts by catalyzing the cutting and rejoining of the recombining DNA molecules. The XerC-XerD complex is essential to convert dimers of the bacterial chromosome into monomers to permit their segregation at cell division. It also contributes to the segregational stability of plasmids. The chain is Tyrosine recombinase XerD from Pseudomonas putida (strain ATCC 47054 / DSM 6125 / CFBP 8728 / NCIMB 11950 / KT2440).